The sequence spans 76 residues: Conopeptide X11.1 (76 aa).

Positions Met-1–Gly-20 are cleaved as a signal peptide. A propeptide spanning residues Glu-21–Arg-39 is cleaved from the precursor. 4 disulfide bridges follow: Cys-42/Cys-56, Cys-49/Cys-61, Cys-55/Cys-66, and Cys-60/Cys-73.

In terms of tissue distribution, expressed by the venom duct.

The protein resides in the secreted. Antimicrobial peptide that potently inhibits growth of Mycobacterium tuberculosis (H37Rv strain) (MIC=3 uM). The protein is Conopeptide X11.1 of Conasprella ximenes (Interrupted cone).